The following is a 464-amino-acid chain: GTPase Der (464 aa).

EngA-type G domains follow at residues 3-166 (PTIA…AVES) and 177-350 (LKMA…QAAT). Residues 9 to 16 (GRPNVGKS), 56 to 60 (DTGGI), 118 to 121 (NKVD), 183 to 190 (GRPNVGKS), 230 to 234 (DTAGV), and 295 to 298 (NKWD) contribute to the GTP site. Residues 351–435 (EKYSTSFLTR…PVRIEYRSGD (85 aa)) enclose the KH-like domain.

The protein belongs to the TRAFAC class TrmE-Era-EngA-EngB-Septin-like GTPase superfamily. EngA (Der) GTPase family. Associates with the 50S ribosomal subunit.

GTPase that plays an essential role in the late steps of ribosome biogenesis. This is GTPase Der from Teredinibacter turnerae (strain ATCC 39867 / T7901).